The primary structure comprises 327 residues: E3 ubiquitin ligase Rnf121 (327 aa).

Helical transmembrane passes span 50-70 (MHAEMVLILIATLVVAQLLLV), 79-96 (SYNMVTLFQMWIVPVYFT), 99-119 (LHWWRFLGIWIVFSIITAYIT), 148-168 (ATGIVGYIAVMFTLFGLNLLF), and 173-193 (EDAMDFGISLLFYGLYYGVLG). The segment at 226–276 (CAVCGQQIFVDVNEEGIIENTYRLSCNHVFHEFCIRGWCIVGKKQTCPYCK) adopts an RING-type; atypical zinc-finger fold.

The protein belongs to the RNF121 family.

It localises to the endoplasmic reticulum membrane. The catalysed reaction is S-ubiquitinyl-[E2 ubiquitin-conjugating enzyme]-L-cysteine + [acceptor protein]-L-lysine = [E2 ubiquitin-conjugating enzyme]-L-cysteine + N(6)-ubiquitinyl-[acceptor protein]-L-lysine.. It functions in the pathway protein modification; protein ubiquitination. E3 ubiquitin ligase which accepts ubiquitin and transfers it to substrates thereby promoting their degradation by the endoplasmic reticulum-associated degradation (ERAD) pathway which is a pathway involved in ubiquitin-dependent degradation of misfolded endoplasmic reticulum proteins. May regulate the unfolded protein response to reduce endoplasmic reticulum stress. The protein is E3 ubiquitin ligase Rnf121 (rnf121) of Xenopus laevis (African clawed frog).